The sequence spans 704 residues: SH3KBP1-binding protein 1 (704 aa).

A2 is subject to N-acetylalanine. Residues 19 to 88 form the BTB domain; sequence EVIHLNVGGK…LRTKELDPRG (70 aa). A disordered region spans residues 146 to 165; it reads VGPQQIGGRPAPVRRSNTMP. T163 is subject to Phosphothreonine. WD repeat units lie at residues 233–280, 283–322, 324–359, 428–466, and 548–586; these read RLDW…GGSE, VFHL…WQVQ, VQPI…LRMK, VHRS…GMIS, and LECE…DGLG. The disordered stretch occupies residues 609-704; it reads PLTSSRASFP…PKNTLNETSF (96 aa). Residues 611–631 show a composition bias toward low complexity; that stretch reads TSSRASFPSPSPRTSLTSLHS. The short motif at 618-623 is the PXXXPR element; sequence PSPSPR. S644 and S646 each carry phosphoserine. A PXXXPR motif is present at residues 678–683; it reads PTPAPR.

Belongs to the KCTD3 family. In terms of assembly, monomer. Interacts with CUL3; interaction is direct and forms a 5:5 heterodecamer. Interacts (via PXXXPR motifs) with SH3KBP1 (via SH3 domains). Directly interacts with cathepsin B/CTSB.

Its subcellular location is the lysosome. Inhibits CBL-SH3KBP1 complex mediated down-regulation of EGFR signaling by sequestration of SH3KBP1. Binds to SH3KBP1 and prevents its interaction with CBL and inhibits translocation of SH3KBP1 to EGFR containing vesicles upon EGF stimulation. This chain is SH3KBP1-binding protein 1 (Shkbp1), found in Rattus norvegicus (Rat).